We begin with the raw amino-acid sequence, 460 residues long: Cysteine--tRNA ligase (460 aa).

C28 is a Zn(2+) binding site. The 'HIGH' region signature appears at 30–40 (VTIYDLCHIGH). C209, H234, and E238 together coordinate Zn(2+). A 'KMSKS' region motif is present at residues 266–270 (KMSKS). K269 is a binding site for ATP.

This sequence belongs to the class-I aminoacyl-tRNA synthetase family. In terms of assembly, monomer. Zn(2+) is required as a cofactor.

It is found in the cytoplasm. The enzyme catalyses tRNA(Cys) + L-cysteine + ATP = L-cysteinyl-tRNA(Cys) + AMP + diphosphate. This is Cysteine--tRNA ligase from Vibrio vulnificus (strain CMCP6).